Consider the following 295-residue polypeptide: 4-hydroxy-tetrahydrodipicolinate synthase (295 aa).

Pyruvate is bound at residue threonine 46. Tyrosine 134 acts as the Proton donor/acceptor in catalysis. Catalysis depends on lysine 162, which acts as the Schiff-base intermediate with substrate. Valine 204 lines the pyruvate pocket.

The protein belongs to the DapA family. As to quaternary structure, homotetramer; dimer of dimers.

The protein localises to the cytoplasm. The enzyme catalyses L-aspartate 4-semialdehyde + pyruvate = (2S,4S)-4-hydroxy-2,3,4,5-tetrahydrodipicolinate + H2O + H(+). Its pathway is amino-acid biosynthesis; L-lysine biosynthesis via DAP pathway; (S)-tetrahydrodipicolinate from L-aspartate: step 3/4. Functionally, catalyzes the condensation of (S)-aspartate-beta-semialdehyde [(S)-ASA] and pyruvate to 4-hydroxy-tetrahydrodipicolinate (HTPA). The chain is 4-hydroxy-tetrahydrodipicolinate synthase from Oceanobacillus iheyensis (strain DSM 14371 / CIP 107618 / JCM 11309 / KCTC 3954 / HTE831).